The sequence spans 433 residues: Serine--tRNA ligase (433 aa).

An L-serine-binding site is contributed by 235 to 237; that stretch reads TSE. 266–268 lines the ATP pocket; it reads RSE. Glu289 is an L-serine binding site. Residue 353-356 coordinates ATP; it reads EISS. L-serine is bound at residue Ser388.

The protein belongs to the class-II aminoacyl-tRNA synthetase family. Type-1 seryl-tRNA synthetase subfamily. In terms of assembly, homodimer. The tRNA molecule binds across the dimer.

The protein resides in the cytoplasm. It catalyses the reaction tRNA(Ser) + L-serine + ATP = L-seryl-tRNA(Ser) + AMP + diphosphate + H(+). The catalysed reaction is tRNA(Sec) + L-serine + ATP = L-seryl-tRNA(Sec) + AMP + diphosphate + H(+). The protein operates within aminoacyl-tRNA biosynthesis; selenocysteinyl-tRNA(Sec) biosynthesis; L-seryl-tRNA(Sec) from L-serine and tRNA(Sec): step 1/1. Catalyzes the attachment of serine to tRNA(Ser). Is also able to aminoacylate tRNA(Sec) with serine, to form the misacylated tRNA L-seryl-tRNA(Sec), which will be further converted into selenocysteinyl-tRNA(Sec). In Burkholderia lata (strain ATCC 17760 / DSM 23089 / LMG 22485 / NCIMB 9086 / R18194 / 383), this protein is Serine--tRNA ligase.